A 241-amino-acid polypeptide reads, in one-letter code: DNA repair protein RecO (241 aa).

It belongs to the RecO family.

Functionally, involved in DNA repair and RecF pathway recombination. This chain is DNA repair protein RecO, found in Rickettsia canadensis (strain McKiel).